The following is a 219-amino-acid chain: Envelope protein US9 homolog (219 aa).

Residues 1-193 (MEKAEAAAVV…RHRRRRVALT (193 aa)) are Intravirion-facing. Residues 145–146 (LL) carry the Di-leucine internalization motif motif. The tract at residues 153-168 (DYDSESGCYYSESDNE) is acidic. A phosphoserine; by host CK2 mark is found at Ser-163 and Ser-165. A helical; Signal-anchor for type II membrane protein membrane pass occupies residues 194–214 (VAGVILVVVLCAISGIVGAFL). The Virion surface segment spans residues 215 to 219 (ARVFP).

It belongs to the alphaherpesvirinae envelope protein US9 family. Phosphorylated on serines within the acidic cluster. Phosphorylation determines whether endocytosed viral US9 traffics to the trans-Golgi network or recycles to the cell membrane.

It is found in the virion membrane. Its subcellular location is the host Golgi apparatus membrane. It localises to the host smooth endoplasmic reticulum membrane. The protein localises to the host cell membrane. Functionally, essential for the anterograde spread of the infection throughout the host nervous system. Together with the gE/gI heterodimer, US9 is involved in the sorting and transport of viral structural components toward axon tips. This Equine herpesvirus 1 (strain Kentucky A) (EHV-1) protein is Envelope protein US9 homolog.